Reading from the N-terminus, the 238-residue chain is Probable septum site-determining protein MinC (238 aa).

Belongs to the MinC family. As to quaternary structure, interacts with MinD and FtsZ.

Cell division inhibitor that blocks the formation of polar Z ring septums. Rapidly oscillates between the poles of the cell to destabilize FtsZ filaments that have formed before they mature into polar Z rings. Prevents FtsZ polymerization. This chain is Probable septum site-determining protein MinC, found in Blochmanniella floridana.